A 535-amino-acid chain; its full sequence is Beta-hexosaminidase 3 (535 aa).

Residues 1-24 (MRGSGAKIAGVLPLFMLFIAGTIS) form the signal peptide. The N-linked (GlcNAc...) asparagine glycan is linked to N92. C292 and C334 are joined by a disulfide. Catalysis depends on E329, which acts as the Proton donor. N-linked (GlcNAc...) asparagine glycans are attached at residues N331, N405, N441, and N496. Residues C506 and C532 are joined by a disulfide bond.

Belongs to the glycosyl hydrolase 20 family. Post-translationally, N-glycosylated. Expressed in roots, leaves, stems, flowers and siliques.

It is found in the cell membrane. The enzyme catalyses Hydrolysis of terminal non-reducing N-acetyl-D-hexosamine residues in N-acetyl-beta-D-hexosaminides.. Slightly inhibited by N-acetylcastanospermine. In terms of biological role, has a broad substrate specificity. Can use synthetic substrates such as pyridylaminated chitotriose, p-nitrophenyl-beta-N-acetylglucosaminide, p-nitrophenyl-2-acetamido-2-deoxy-beta-D-glucopyranoside (pNP-GlcNAc), p-nitrophenyl-2-acetamido-2-deoxy-beta-D-galactopyranoside (pNP-GalNAc), 4-methylumbelliferyl-2-acetamido-2-deoxy-beta-D-glucopyranoside (MU-GlcNAc), and 4-methylumbelliferyl-6-sulfo-2-acetamido-2-deoxy-beta-D-glucopyranoside (MU-GlcNAc-6SO(4)) as substrates. Removes terminal GlcNAc residues from alpha1,3- and alpha1,6-mannosyl branches of biantennary N-glycans without any strict branch preference. Required for the presence of paucimannosidic N-glycans in glycoproteins of roots and leaves. The protein is Beta-hexosaminidase 3 (HEXO3) of Arabidopsis thaliana (Mouse-ear cress).